A 511-amino-acid chain; its full sequence is Maturase K (511 aa).

It belongs to the intron maturase 2 family. MatK subfamily.

It is found in the plastid. The protein resides in the chloroplast. In terms of biological role, usually encoded in the trnK tRNA gene intron. Probably assists in splicing its own and other chloroplast group II introns. This Avena sativa (Oat) protein is Maturase K.